A 148-amino-acid polypeptide reads, in one-letter code: UPF0260 protein mll2411 (148 aa).

It belongs to the UPF0260 family.

This Mesorhizobium japonicum (strain LMG 29417 / CECT 9101 / MAFF 303099) (Mesorhizobium loti (strain MAFF 303099)) protein is UPF0260 protein mll2411.